The chain runs to 92 residues: MVENVIYPAYLDASLSRSEGRRVAQSAAVEAPTVDEIAKAVQQVGYDAVIERDKRYSREFETRGRVLVNNADDATKNDIVQAVAAYVGILRD.

The protein belongs to the SRP19 family. Part of the signal recognition particle protein translocation system, which is composed of SRP and FtsY. Archaeal SRP consists of a 7S RNA molecule of 300 nucleotides and two protein subunits: SRP54 and SRP19.

The protein localises to the cytoplasm. Involved in targeting and insertion of nascent membrane proteins into the cytoplasmic membrane. Binds directly to 7S RNA and mediates binding of the 54 kDa subunit of the SRP. The chain is Signal recognition particle 19 kDa protein from Haloferax volcanii (strain ATCC 29605 / DSM 3757 / JCM 8879 / NBRC 14742 / NCIMB 2012 / VKM B-1768 / DS2) (Halobacterium volcanii).